The sequence spans 348 residues: Holliday junction branch migration complex subunit RuvB (348 aa).

Positions 1–181 (MEERMITPQQ…FGVISRLEFY (181 aa)) are large ATPase domain (RuvB-L). 9 residues coordinate ATP: Leu-20, Arg-21, Gly-62, Lys-65, Thr-66, Thr-67, Arg-171, Tyr-181, and Arg-218. Mg(2+) is bound at residue Thr-66. The small ATPAse domain (RuvB-S) stretch occupies residues 182–252 (EVEDLIRIIT…LAGKSLDRLE (71 aa)). The interval 255-348 (PAGLDRIDQK…GDSLFDAAED (94 aa)) is head domain (RuvB-H). Residues Arg-310 and Arg-315 each coordinate DNA. Residues 329–348 (VNSSHQEGGQGDSLFDAAED) are disordered.

This sequence belongs to the RuvB family. In terms of assembly, homohexamer. Forms an RuvA(8)-RuvB(12)-Holliday junction (HJ) complex. HJ DNA is sandwiched between 2 RuvA tetramers; dsDNA enters through RuvA and exits via RuvB. An RuvB hexamer assembles on each DNA strand where it exits the tetramer. Each RuvB hexamer is contacted by two RuvA subunits (via domain III) on 2 adjacent RuvB subunits; this complex drives branch migration. In the full resolvosome a probable DNA-RuvA(4)-RuvB(12)-RuvC(2) complex forms which resolves the HJ.

Its subcellular location is the cytoplasm. It carries out the reaction ATP + H2O = ADP + phosphate + H(+). In terms of biological role, the RuvA-RuvB-RuvC complex processes Holliday junction (HJ) DNA during genetic recombination and DNA repair, while the RuvA-RuvB complex plays an important role in the rescue of blocked DNA replication forks via replication fork reversal (RFR). RuvA specifically binds to HJ cruciform DNA, conferring on it an open structure. The RuvB hexamer acts as an ATP-dependent pump, pulling dsDNA into and through the RuvAB complex. RuvB forms 2 homohexamers on either side of HJ DNA bound by 1 or 2 RuvA tetramers; 4 subunits per hexamer contact DNA at a time. Coordinated motions by a converter formed by DNA-disengaged RuvB subunits stimulates ATP hydrolysis and nucleotide exchange. Immobilization of the converter enables RuvB to convert the ATP-contained energy into a lever motion, pulling 2 nucleotides of DNA out of the RuvA tetramer per ATP hydrolyzed, thus driving DNA branch migration. The RuvB motors rotate together with the DNA substrate, which together with the progressing nucleotide cycle form the mechanistic basis for DNA recombination by continuous HJ branch migration. Branch migration allows RuvC to scan DNA until it finds its consensus sequence, where it cleaves and resolves cruciform DNA. The chain is Holliday junction branch migration complex subunit RuvB from Desulfitobacterium hafniense (strain DSM 10664 / DCB-2).